The chain runs to 329 residues: Lipoyl synthase (329 aa).

[4Fe-4S] cluster contacts are provided by C55, C60, C66, C81, C85, C88, and S292. A Radical SAM core domain is found at 67 to 281; it reads WEDREATFLI…KAEAEAIGFL (215 aa).

The protein belongs to the radical SAM superfamily. Lipoyl synthase family. Requires [4Fe-4S] cluster as cofactor.

Its subcellular location is the cytoplasm. The enzyme catalyses [[Fe-S] cluster scaffold protein carrying a second [4Fe-4S](2+) cluster] + N(6)-octanoyl-L-lysyl-[protein] + 2 oxidized [2Fe-2S]-[ferredoxin] + 2 S-adenosyl-L-methionine + 4 H(+) = [[Fe-S] cluster scaffold protein] + N(6)-[(R)-dihydrolipoyl]-L-lysyl-[protein] + 4 Fe(3+) + 2 hydrogen sulfide + 2 5'-deoxyadenosine + 2 L-methionine + 2 reduced [2Fe-2S]-[ferredoxin]. It functions in the pathway protein modification; protein lipoylation via endogenous pathway; protein N(6)-(lipoyl)lysine from octanoyl-[acyl-carrier-protein]: step 2/2. Functionally, catalyzes the radical-mediated insertion of two sulfur atoms into the C-6 and C-8 positions of the octanoyl moiety bound to the lipoyl domains of lipoate-dependent enzymes, thereby converting the octanoylated domains into lipoylated derivatives. The sequence is that of Lipoyl synthase from Clavibacter sepedonicus (Clavibacter michiganensis subsp. sepedonicus).